The sequence spans 108 residues: Long neurotoxin 43 (108 aa).

The signal sequence occupies residues 1–21 (MKTLLLTLVVVTIVCLDLAYT). Cystine bridges form between Cys24/Cys42, Cys35/Cys63, Cys48/Cys52, Cys67/Cys78, and Cys79/Cys84.

It belongs to the three-finger toxin family. Long-chain subfamily. Type II alpha-neurotoxin sub-subfamily. In terms of tissue distribution, expressed by the venom gland.

It localises to the secreted. In terms of biological role, binds with high affinity to muscular (alpha-1/CHRNA1) and neuronal (alpha-7/CHRNA7) nicotinic acetylcholine receptor (nAChR) and inhibits acetylcholine from binding to the receptor, thereby impairing neuromuscular and neuronal transmission. In Drysdalia coronoides (White-lipped snake), this protein is Long neurotoxin 43.